The following is a 297-amino-acid chain: Bifunctional protein FolD 1 (297 aa).

Residues 164–166 (GRS) and Thr230 each bind NADP(+).

The protein belongs to the tetrahydrofolate dehydrogenase/cyclohydrolase family. Homodimer.

The enzyme catalyses (6R)-5,10-methylene-5,6,7,8-tetrahydrofolate + NADP(+) = (6R)-5,10-methenyltetrahydrofolate + NADPH. The catalysed reaction is (6R)-5,10-methenyltetrahydrofolate + H2O = (6R)-10-formyltetrahydrofolate + H(+). The protein operates within one-carbon metabolism; tetrahydrofolate interconversion. Its function is as follows. Catalyzes the oxidation of 5,10-methylenetetrahydrofolate to 5,10-methenyltetrahydrofolate and then the hydrolysis of 5,10-methenyltetrahydrofolate to 10-formyltetrahydrofolate. This Rhodococcus jostii (strain RHA1) protein is Bifunctional protein FolD 1.